The following is a 141-amino-acid chain: Ribonuclease P protein component (141 aa).

The protein belongs to the RnpA family. As to quaternary structure, consists of a catalytic RNA component (M1 or rnpB) and a protein subunit.

It catalyses the reaction Endonucleolytic cleavage of RNA, removing 5'-extranucleotides from tRNA precursor.. Functionally, RNaseP catalyzes the removal of the 5'-leader sequence from pre-tRNA to produce the mature 5'-terminus. It can also cleave other RNA substrates such as 4.5S RNA. The protein component plays an auxiliary but essential role in vivo by binding to the 5'-leader sequence and broadening the substrate specificity of the ribozyme. This Onion yellows phytoplasma (strain OY-M) protein is Ribonuclease P protein component.